A 373-amino-acid polypeptide reads, in one-letter code: Secondary metabolism regulator laeA (373 aa).

Disordered stretches follow at residues 1–21 and 53–81; these read MFLN…PLNV and AAER…NPDR. Residues 67-77 are compositionally biased toward polar residues; that stretch reads GSPSINSTSSK.

This sequence belongs to the methyltransferase superfamily. LaeA methyltransferase family. As to quaternary structure, component of the heterotrimeric velvet complex composed of laeA, veA and velB; VeA acting as a bridging protein between laeA and velB.

It is found in the nucleus. It carries out the reaction L-methionyl-[protein] + S-adenosyl-L-methionine = S-methyl-L-methionyl-[protein] + S-adenosyl-L-homocysteine. Functionally, methyltransferase that performs automethylation. No other methyl-accepting substrate has been identified yet. Component of the velvet transcription factor complex that acts as a global regulator for secondary metabolite gene expression. Controls the expression of the cyclopiazonic acid (CPA) gene clusters. Regulates also pigmentation and conidial head morphology. In Aspergillus fumisynnematus, this protein is Secondary metabolism regulator laeA.